The primary structure comprises 105 residues: Nitrogen fixation nifHD region GlnB-like protein 1 (105 aa).

Belongs to the P(II) protein family.

In terms of biological role, could be involved in the regulation of nitrogen fixation. The sequence is that of Nitrogen fixation nifHD region GlnB-like protein 1 (glnBA) from Methanobacterium ivanovii.